A 333-amino-acid polypeptide reads, in one-letter code: Adenosine deaminase (333 aa).

The Zn(2+) site is built by His-12 and His-14. 3 residues coordinate substrate: His-14, Asp-16, and Gly-170. Residue His-197 participates in Zn(2+) binding. The Proton donor role is filled by Glu-200. Asp-278 lines the Zn(2+) pocket. A substrate-binding site is contributed by Asp-279.

It belongs to the metallo-dependent hydrolases superfamily. Adenosine and AMP deaminases family. Adenosine deaminase subfamily. Zn(2+) is required as a cofactor.

It catalyses the reaction adenosine + H2O + H(+) = inosine + NH4(+). The enzyme catalyses 2'-deoxyadenosine + H2O + H(+) = 2'-deoxyinosine + NH4(+). Catalyzes the hydrolytic deamination of adenosine and 2-deoxyadenosine. This chain is Adenosine deaminase, found in Klebsiella pneumoniae subsp. pneumoniae (strain ATCC 700721 / MGH 78578).